Here is a 781-residue protein sequence, read N- to C-terminus: Serine/threonine-protein kinase PLK4 (781 aa).

One can recognise a Protein kinase domain in the interval 14 to 268 (YEVQHLLGKG…LEQVLRHPFM (255 aa)). ATP is bound by residues 20 to 28 (LGKGGFACV) and K43. D139 serves as the catalytic Proton acceptor. The Cryptic POLO box 1 (CPB1) domain occupies 397 to 514 (TEHISVPPLN…ARFVGLVKSK (118 aa)). Residues 463-486 (QPDPGRGLPIQEQTSETHSSGTDN) are disordered. Polar residues predominate over residues 473-486 (QEQTSETHSSGTDN). In terms of domain architecture, Cryptic POLO box 2 (CPB2) spans 515-618 (TPKVTYFSAL…GRRPVVEVLP (104 aa)). Residues 672–751 (PIKRLNVPGV…LPQVQMKLRC (80 aa)) enclose the POLO box domain.

The protein belongs to the protein kinase superfamily. Ser/Thr protein kinase family. CDC5/Polo subfamily. Homodimer. Ubiquitinated by the SCF(Slimb) ubiquitin ligase complex; leading to its degradation by the proteasome during interphase and regulating centriole number and ensuring the block to centriole reduplication.

The protein localises to the cytoplasm. It localises to the cytoskeleton. The protein resides in the microtubule organizing center. It is found in the centrosome. Its subcellular location is the centriole. It catalyses the reaction L-seryl-[protein] + ATP = O-phospho-L-seryl-[protein] + ADP + H(+). It carries out the reaction L-threonyl-[protein] + ATP = O-phospho-L-threonyl-[protein] + ADP + H(+). Its function is as follows. Serine/threonine-protein kinase that plays a central role in centriole duplication. Able to trigger procentriole formation on the surface of the mother centriole cylinder, using mother centriole as a platform, leading to the recruitment of centriole biogenesis proteins such as sas-6. When overexpressed, it is able to induce centrosome amplification through the simultaneous generation of multiple procentrioles adjoining each parental centriole during S phase. Centrosome amplification following overexpression can initiate tumorigenesis, highlighting the importance of centrosome regulation in cancers. The polypeptide is Serine/threonine-protein kinase PLK4 (SAK) (Drosophila virilis (Fruit fly)).